The sequence spans 371 residues: tRNA-specific 2-thiouridylase MnmA (371 aa).

ATP-binding positions include 13–20 and M39; that span reads GMSGGVDS. The interval 99-101 is interaction with target base in tRNA; sequence NPD. The Nucleophile role is filled by C104. A disulfide bridge links C104 with C200. G128 lines the ATP pocket. Residues 150-152 form an interaction with tRNA region; it reads KDQ. Catalysis depends on C200, which acts as the Cysteine persulfide intermediate. Residues 308-309 form an interaction with tRNA region; that stretch reads RY.

The protein belongs to the MnmA/TRMU family.

It is found in the cytoplasm. The catalysed reaction is S-sulfanyl-L-cysteinyl-[protein] + uridine(34) in tRNA + AH2 + ATP = 2-thiouridine(34) in tRNA + L-cysteinyl-[protein] + A + AMP + diphosphate + H(+). Functionally, catalyzes the 2-thiolation of uridine at the wobble position (U34) of tRNA, leading to the formation of s(2)U34. The protein is tRNA-specific 2-thiouridylase MnmA of Geobacillus thermodenitrificans (strain NG80-2).